We begin with the raw amino-acid sequence, 143 residues long: Transcription antitermination protein NusB (143 aa).

Belongs to the NusB family.

Functionally, involved in transcription antitermination. Required for transcription of ribosomal RNA (rRNA) genes. Binds specifically to the boxA antiterminator sequence of the ribosomal RNA (rrn) operons. The chain is Transcription antitermination protein NusB from Mannheimia succiniciproducens (strain KCTC 0769BP / MBEL55E).